An 82-amino-acid chain; its full sequence is Large ribosomal subunit protein uL29 (82 aa).

The protein belongs to the universal ribosomal protein uL29 family.

The protein is Large ribosomal subunit protein uL29 of Trichodesmium erythraeum (strain IMS101).